We begin with the raw amino-acid sequence, 358 residues long: Na(+)/H(+) exchange regulatory cofactor NHE-RF1 (358 aa).

Ser2 is subject to N-acetylserine. Residues Ser2 and Ser46 each carry the phosphoserine modification. The PDZ 1 domain maps to 14-94 (LCCLEKGPNG…AVRLLVVDPE (81 aa)). Over residues 114–134 (QETPGQAEPAAAAEAQGAGNE) the composition is skewed to low complexity. 2 disordered regions span residues 114 to 192 (QETP…EASG) and 269 to 358 (SREA…FSNL). Over residues 135-149 (NEPREADKSHPEQRK) the composition is skewed to basic and acidic residues. Residues 154–234 (LCTMKKGPSG…ETKLLVVDRE (81 aa)) enclose the PDZ 2 domain. Phosphoserine occurs at positions 162, 269, 280, 290, and 291. Polar residues predominate over residues 287–306 (RSASSDTSEELNSQDSPPKQ). At Thr293 the chain carries Phosphothreonine. A phosphoserine mark is found at Ser294, Ser299, and Ser302. Residues 307 to 319 (DSTAPSSTSSSDP) are compositionally biased toward low complexity. The span at 348–358 (WSKKNELFSNL) shows a compositional bias: basic and acidic residues.

As to quaternary structure, homodimer, and heterodimer with NHERF2. Binds the N-termini of EZR, RDX and MSN. Binds the C-termini of PDGFRA, PDGFRB, ADRB2, NOS2 and CFTR. Binds ARHGAP17, EPI64, RACK1, OPRK1, GNAQ, CTNNB1 and PLCB3. Binds PDZK1. Interacts with CLCN3. Binds the C-terminus of PAG1. In resting T-cells, part of a PAG1-NHERF1-MSN complex which is disrupted upon TCR activation. Forms a complex with CFTR and SLC4A7. Forms a complex with SLC4A7 and ATP6V1B1. Interacts with TRPC4 (via the PDZ-binding domain). Directly interacts with HTR4. Interacts (via the PDZ 1 domain) with PODXL (via the C-terminal PDZ-binding motif DTHL); interaction is not detected in glomerular epithelium cells. Interacts (via the PDZ 1 domain) with PODXL (via the C-terminal PDZ-binding motif DTHL); the interaction take place early in the secretory pathway and is necessary for its apical membrane sorting. Interacts with SLC26A3. Interacts with MCC. Interacts with SLC34A1. Interacts (via the PDZ domains) with SLC26A6 isoform 4 and isoform 5. Interacts (via PDZ domains) with ACE2 (via PDZ-binding motif); the interaction may enhance ACE2 membrane residence. Post-translationally, phosphorylated on serine residues.

It localises to the cytoplasm. It is found in the apical cell membrane. The protein localises to the endomembrane system. The protein resides in the cell projection. Its subcellular location is the filopodium. It localises to the ruffle. It is found in the microvillus. Its function is as follows. Scaffold protein that connects plasma membrane proteins with members of the ezrin/moesin/radixin family and thereby helps to link them to the actin cytoskeleton and to regulate their surface expression. Necessary for recycling of internalized ADRB2. Was first known to play a role in the regulation of the activity and subcellular location of SLC9A3. Necessary for cAMP-mediated phosphorylation and inhibition of SLC9A3. Involved in sperm capacitation. May participate in the regulation of the chloride and bicarbonate homeostasis in spermatozoa. May enhance Wnt signaling. May participate in HTR4 targeting to microvilli. Involved in the regulation of phosphate reabsorption in the renal proximal tubules. This Macaca fascicularis (Crab-eating macaque) protein is Na(+)/H(+) exchange regulatory cofactor NHE-RF1 (NHERF1).